The sequence spans 344 residues: Uroporphyrinogen decarboxylase (344 aa).

Residues 26 to 30 (RQAGR), Asp76, Tyr151, Ser206, and His321 contribute to the substrate site.

Belongs to the uroporphyrinogen decarboxylase family. Homodimer.

The protein resides in the cytoplasm. It catalyses the reaction uroporphyrinogen III + 4 H(+) = coproporphyrinogen III + 4 CO2. It functions in the pathway porphyrin-containing compound metabolism; protoporphyrin-IX biosynthesis; coproporphyrinogen-III from 5-aminolevulinate: step 4/4. In terms of biological role, catalyzes the decarboxylation of four acetate groups of uroporphyrinogen-III to yield coproporphyrinogen-III. This chain is Uroporphyrinogen decarboxylase, found in Sinorhizobium fredii (strain NBRC 101917 / NGR234).